The primary structure comprises 271 residues: Interleukin-1 alpha (271 aa).

The propeptide occupies 1 to 112 (MAKVPDMFED…DSEEEIIKPR (112 aa)). K82 carries the N6-acetyllysine modification. The tract at residues 82–86 (KKRRL) is nuclear localization signal (NLS). A Phosphoserine modification is found at S87. 5 N-linked (GlcNAc...) asparagine glycosylation sites follow: N102, N121, N137, N141, and N211.

It belongs to the IL-1 family. As to quaternary structure, monomer. Interacts with TMED10; the interaction mediates the translocation from the cytoplasm into the ERGIC (endoplasmic reticulum-Golgi intermediate compartment) and thereby secretion. Interacts with IL1R1. Interacts with S100A13; this interaction is the first step in the export of IL1A, followed by direct translocation of this complex across the plasma membrane. Post-translationally, acetylated within its nuclear localization sequence, which impacts subcellular localization. In terms of processing, proteolytic processed by CAPN1 in a calcium-dependent manner. Cleavage from 31 kDa precursor to 18 kDa biologically active molecules. Phosphorylated. Phosphorylation greatly enhances susceptibility to digestion and promotes the conversion of pre-IL1A alpha to the biologically active IL1A.

It localises to the nucleus. The protein resides in the cytoplasm. Its subcellular location is the secreted. Cytokine constitutively present intracellularly in nearly all resting non-hematopoietic cells that plays an important role in inflammation and bridges the innate and adaptive immune systems. After binding to its receptor IL1R1 together with its accessory protein IL1RAP, forms the high affinity interleukin-1 receptor complex. Signaling involves the recruitment of adapter molecules such as MYD88, IRAK1 or IRAK4. In turn, mediates the activation of NF-kappa-B and the three MAPK pathways p38, p42/p44 and JNK pathways. Within the cell, acts as an alarmin and cell death results in its liberation in the extracellular space after disruption of the cell membrane to induce inflammation and alert the host to injury or damage. In addition to its role as a danger signal, which occurs when the cytokine is passively released by cell necrosis, directly senses DNA damage and acts as signal for genotoxic stress without loss of cell integrity. This is Interleukin-1 alpha (IL1A) from Macaca mulatta (Rhesus macaque).